The sequence spans 593 residues: Probable 5'-nucleotidase (593 aa).

The signal sequence occupies residues 1–21; sequence MKRFIPHRVIHAVCIGLALVG. Cys-22 carries N-palmitoyl cysteine lipidation. Cys-22 is lipidated: S-diacylglycerol cysteine. Residues Asp-41, His-43, Asp-91, Asn-123, and His-224 each coordinate a divalent metal cation. Substrate contacts are provided by residues Phe-456 and 539 to 545; that span reads YIARGKD.

This sequence belongs to the 5'-nucleotidase family. A divalent metal cation serves as cofactor.

It localises to the cell membrane. The catalysed reaction is a ribonucleoside 5'-phosphate + H2O = a ribonucleoside + phosphate. This chain is Probable 5'-nucleotidase, found in Treponema pallidum (strain Nichols).